The chain runs to 120 residues: Ribonuclease P protein component (120 aa).

The protein belongs to the RnpA family. As to quaternary structure, consists of a catalytic RNA component (M1 or rnpB) and a protein subunit.

It catalyses the reaction Endonucleolytic cleavage of RNA, removing 5'-extranucleotides from tRNA precursor.. In terms of biological role, RNaseP catalyzes the removal of the 5'-leader sequence from pre-tRNA to produce the mature 5'-terminus. It can also cleave other RNA substrates such as 4.5S RNA. The protein component plays an auxiliary but essential role in vivo by binding to the 5'-leader sequence and broadening the substrate specificity of the ribozyme. This Desulfotalea psychrophila (strain LSv54 / DSM 12343) protein is Ribonuclease P protein component.